A 60-amino-acid chain; its full sequence is UPF0337 protein SSP1134 (60 aa).

Positions Met-1–Lys-41 are disordered. Residues Asp-23–Lys-41 show a composition bias toward basic and acidic residues.

Belongs to the UPF0337 (CsbD) family.

The polypeptide is UPF0337 protein SSP1134 (Staphylococcus saprophyticus subsp. saprophyticus (strain ATCC 15305 / DSM 20229 / NCIMB 8711 / NCTC 7292 / S-41)).